A 351-amino-acid polypeptide reads, in one-letter code: Methionine import ATP-binding protein MetN (351 aa).

The region spanning 4-249 is the ABC transporter domain; sequence VQLDHVSVTF…PKAELTQKFV (246 aa). 41–48 contributes to the ATP binding site; the sequence is GFSGAGKS.

The protein belongs to the ABC transporter superfamily. Methionine importer (TC 3.A.1.24) family. The complex is composed of two ATP-binding proteins (MetN), two transmembrane proteins (MetI) and a solute-binding protein (MetQ).

The protein localises to the cell membrane. It carries out the reaction L-methionine(out) + ATP + H2O = L-methionine(in) + ADP + phosphate + H(+). The catalysed reaction is D-methionine(out) + ATP + H2O = D-methionine(in) + ADP + phosphate + H(+). Part of the ABC transporter complex MetNIQ involved in methionine import. Responsible for energy coupling to the transport system. The polypeptide is Methionine import ATP-binding protein MetN (Lactobacillus delbrueckii subsp. bulgaricus (strain ATCC BAA-365 / Lb-18)).